The chain runs to 358 residues: Beta-lactamase (358 aa).

The active-site Acyl-ester intermediate is the serine 60. Residue tyrosine 146 is the Proton acceptor of the active site. Residue 311–313 coordinates substrate; the sequence is KTG.

Belongs to the class-C beta-lactamase family.

Its subcellular location is the periplasm. The catalysed reaction is a beta-lactam + H2O = a substituted beta-amino acid. Its function is as follows. This protein is a serine beta-lactamase with a substrate specificity for cephalosporins. This is Beta-lactamase from Pseudomonas fluorescens.